Consider the following 476-residue polypeptide: Sulfite exporter TauE/SafE family protein 3 (476 aa).

Transmembrane regions (helical) follow at residues 8 to 28 (WLGL…FAFV), 76 to 92 (FNWQ…FGAA), 99 to 115 (VGGG…IIGF), 120 to 142 (ATAI…NLRL), 151 to 171 (IIDY…ISIG), 172 to 192 (VAFN…VLFL), 257 to 277 (VYWK…ALQI), 291 to 311 (VINL…AVAL), 339 to 359 (FGII…FIMG), 360 to 380 (PLFL…TFAM), 397 to 417 (FPVP…WVGQ), and 433 to 453 (IIFI…GVGI).

Belongs to the 4-toluene sulfonate uptake permease (TSUP) (TC 2.A.102) family.

The protein localises to the membrane. This chain is Sulfite exporter TauE/SafE family protein 3, found in Arabidopsis thaliana (Mouse-ear cress).